The chain runs to 252 residues: Probable endonuclease 4 (252 aa).

His56, His96, Glu129, Asp162, His165, His191, Asp204, His206, and Glu233 together coordinate Zn(2+).

It belongs to the AP endonuclease 2 family. The cofactor is Zn(2+).

It carries out the reaction Endonucleolytic cleavage to 5'-phosphooligonucleotide end-products.. Functionally, endonuclease IV plays a role in DNA repair. It cleaves phosphodiester bonds at apurinic or apyrimidinic (AP) sites, generating a 3'-hydroxyl group and a 5'-terminal sugar phosphate. In Mycobacterium marinum (strain ATCC BAA-535 / M), this protein is Probable endonuclease 4.